The sequence spans 134 residues: Calcitonin gene-related peptide 2 (134 aa).

A signal peptide spans 1–26 (MDFWKFFPFLALSSMWVLCLASSLQA). A propeptide spanning residues 27 to 86 (APFRSALESSLDLGTLSDQEKHLLLAALIQDYEQKARKLEQEEQETEGSRKGSSSSVISQ) is cleaved from the precursor. A disordered region spans residues 65–91 (LEQEEQETEGSRKGSSSSVISQKRSCN). The segment covering 77-89 (KGSSSSVISQKRS) has biased composition (low complexity). A disulfide bond links Cys90 and Cys95. At Phe125 the chain carries Phenylalanine amide. The propeptide occupies 131–134 (DLRV).

This sequence belongs to the calcitonin family.

It is found in the secreted. CALCB/CGRP2 is a peptide hormone that induces vasodilation mediated by the CALCRL-RAMP1 receptor complex. Dilates a variety of vessels including the coronary, cerebral and systemic vasculature. Its abundance in the CNS also points toward a neurotransmitter or neuromodulator role. In Rattus norvegicus (Rat), this protein is Calcitonin gene-related peptide 2.